We begin with the raw amino-acid sequence, 379 residues long: Guanine nucleotide-binding protein G(s) subunit alpha (379 aa).

Residues 1-25 (MGCLGNSKTEDQRNEEKVQRETNKK) are disordered. Residue Gly2 is the site of N-palmitoyl glycine attachment. A lipid anchor (S-palmitoyl cysteine) is attached at Cys3. A compositionally biased stretch (basic and acidic residues) spans 8–25 (KTEDQRNEEKVQRETNKK). The region spanning 39-379 (ATHRLLLLGA…RMHLRQYELL (341 aa)) is the G-alpha domain. The interval 42–55 (RLLLLGAGESGKSS) is G1 motif. GTP is bound by residues 47–55 (GAGESGKSS), 182–189 (LLRCRVLT), 208–212 (DVGGQ), 277–280 (NKQD), and Ala351. 2 residues coordinate Mg(2+): Ser54 and Thr189. The tract at residues 181–189 (DLLRCRVLT) is G2 motif. The interval 204 to 213 (FHMFDVGGQR) is G3 motif. The G4 motif stretch occupies residues 273-280 (ILFLNKQD). The segment at 349–354 (TCAVDT) is G5 motif.

This sequence belongs to the G-alpha family. G(s) subfamily. In terms of assembly, heterotrimeric G proteins are composed of 3 units; alpha, beta and gamma. The alpha chain contains the guanine nucleotide binding site.

It is found in the cell membrane. Functionally, guanine nucleotide-binding proteins (G proteins) function as transducers in numerous signaling pathways controlled by G protein-coupled receptors (GPCRs). Signaling involves the activation of adenylyl cyclases, resulting in increased levels of the signaling molecule cAMP. GNAS functions downstream of several GPCRs, including beta-adrenergic receptors. Stimulates the Ras signaling pathway. This is Guanine nucleotide-binding protein G(s) subunit alpha (gnas) from Xenopus laevis (African clawed frog).